The following is an 84-amino-acid chain: Figainin 2 (84 aa).

Positions Met1–Cys22 are cleaved as a signal peptide. Basic and acidic residues predominate over residues Glu23–Glu39. Residues Glu23–Lys53 form a disordered region. A propeptide spanning residues Glu23–Glu54 is cleaved from the precursor. Residues Glu40 to Asn49 show a composition bias toward acidic residues.

As to expression, expressed by the skin glands.

The protein resides in the secreted. In terms of biological role, antimicrobial peptide that displays antibacterial, antiprotozoal, and antiviral activity. Exhibits antibacterial activity against the Gram-positive bacteria S.epidermidis ATCC 12228 (MIC=4 uM), E.casseliflavus ATCC 700327 (MIC=4 uM), S.aureus ATCC 25923 (MIC=8 uM) and E.faecalis ATCC 29212 (MIC=8 uM), and the Gram-negative bacteria E.coli ATCC 25922 (MIC=8 uM), K.pneumoniae ATCC 13883 (MIC=8 uM), the multi-resistant clinical isolate strain K.pneumoniae carbapanemase (KPC) MR (MIC=16 uM), and P.aeruginosa ATCC 27853 (MIC=32 uM). Displays antiprotozoal activity against the epimastigote form of T.cruzi (IC(50)=6.32 uM). Does not show antimicrobial against the fungi C.albicans ATCC 90028 and C.parapsilosis ATCC 22019. Displays antiviral activity against the human viruses chikungunya (EC(50)=17.9 uM), Dengue serotype 4 (EC(50)=20.8 uM) and Yellow Fever (EC(50)=21.8 uM). Shows moderate cytolytic activity against human erythrocytes (HC(50)=48.9 uM), and activates the oxidative burst in human neutrophils. Also displays anti-proliferative effects against MCF-7 breast cancer cells (IC(50)=15.3 uM) and B16F10 murine melanoma cells (IC(50)=12.8 uM). The polypeptide is Figainin 2 (Boana raniceps (Chaco tree frog)).